A 345-amino-acid polypeptide reads, in one-letter code: Heat-inducible transcription repressor HrcA (345 aa).

Belongs to the HrcA family.

Functionally, negative regulator of class I heat shock genes (grpE-dnaK-dnaJ and groELS operons). Prevents heat-shock induction of these operons. This Dehalococcoides mccartyi (strain ATCC BAA-2266 / KCTC 15142 / 195) (Dehalococcoides ethenogenes (strain 195)) protein is Heat-inducible transcription repressor HrcA.